The following is a 736-amino-acid chain: Phosphoribosylformylglycinamidine synthase subunit PurL (736 aa).

The active site involves H48. Y51 and K90 together coordinate ATP. E92 provides a ligand contact to Mg(2+). Substrate is bound by residues 93–96 (SHNH) and R115. The Proton acceptor role is filled by H94. D116 provides a ligand contact to Mg(2+). A substrate-binding site is contributed by Q239. Position 267 (D267) interacts with Mg(2+). Residue 311–313 (ESQ) coordinates substrate. Positions 492 and 529 each coordinate ATP. N530 contributes to the Mg(2+) binding site. Position 532 (S532) interacts with substrate.

The protein belongs to the FGAMS family. In terms of assembly, monomer. Part of the FGAM synthase complex composed of 1 PurL, 1 PurQ and 2 PurS subunits.

Its subcellular location is the cytoplasm. It carries out the reaction N(2)-formyl-N(1)-(5-phospho-beta-D-ribosyl)glycinamide + L-glutamine + ATP + H2O = 2-formamido-N(1)-(5-O-phospho-beta-D-ribosyl)acetamidine + L-glutamate + ADP + phosphate + H(+). The protein operates within purine metabolism; IMP biosynthesis via de novo pathway; 5-amino-1-(5-phospho-D-ribosyl)imidazole from N(2)-formyl-N(1)-(5-phospho-D-ribosyl)glycinamide: step 1/2. Its function is as follows. Part of the phosphoribosylformylglycinamidine synthase complex involved in the purines biosynthetic pathway. Catalyzes the ATP-dependent conversion of formylglycinamide ribonucleotide (FGAR) and glutamine to yield formylglycinamidine ribonucleotide (FGAM) and glutamate. The FGAM synthase complex is composed of three subunits. PurQ produces an ammonia molecule by converting glutamine to glutamate. PurL transfers the ammonia molecule to FGAR to form FGAM in an ATP-dependent manner. PurS interacts with PurQ and PurL and is thought to assist in the transfer of the ammonia molecule from PurQ to PurL. In Bradyrhizobium diazoefficiens (strain JCM 10833 / BCRC 13528 / IAM 13628 / NBRC 14792 / USDA 110), this protein is Phosphoribosylformylglycinamidine synthase subunit PurL.